Here is a 1439-residue protein sequence, read N- to C-terminus: MNELMKILGQTGQSVTFDQIKIQLASSEQVRSWSYGEIKKPETINYRTFKPERDGLFCARIFGPIKDYECLCGKYKRMKFRGIVCEKCGVEVTLAKVRRERMGHIELASPVAHIWFLKSLPSRIATMLDLPLKDVEPVLYFEKFLVLDKGVCESDQIDSYKNGKKRDQYLLDEIRCEDLLDEYPDAGIDVGIGAEAIKRALSSYDWGIPNDQERELSLAAKEKGLPDPFDYDADVMEGDSEKTMMRKKLRKATSEAARKKLVKRLKLVEAFVESGSRPDWMIMDIVPVIPPELRPLVPLDGGRFATSDLNDLYRRVINRNNRLKRLIELRAPDIIVRNEKRMLQEAVDALFDNGRRGRAITGANKRPLKSLSDMLKGKQGRFRQNLLGKRVDYSGRSVIVVGPELKLHQCGLPKKMALELFKPFIYSKLEKYGHATTIKAAKRMVEKERPEVWDILEEVIREHPVMLNRAPTLHRLGIQAFEPTLIEGKAIQLHPLVCTAFNADFDGDQMAVHVPLSLEAQLEARVLMMSTNNILSPANGKPIIVPSQDIVLGLYYLSLEVPEYRETPDEAVIKDGKIVTAAPPAYSDVAEIESAMLSGSLKLHDKIRLRLPTIDAEGKSVRQTILTTPGRALIAQILPKHQAIPFSLVNKQLTKKNVSDVIDTVYRHCGQKEAVIFCDRLMGLGFRHAARAGISFGKDDMIIPEAKATLVGKTSEEVKEFEQQYQDGLITAGERYNKVVDAWSRCTDEVQAAMLKEISKQVIGKPTNSVWMMSHSGARGSPAQMKQLAGMRGLMVKPSGEIIEQPIIANFKEGLSVLDYFTSSHGARKGLADTALKTANSGYLTRRLVDVAQDCIIVEPDCGTERGLTVRAVMDSGEVVASLSERILGRTLSKDVIHPVTQDVILPRNTLIEEAEAELIEKAGVESVDIRSVLTCDSRVGICAHCYGRDLARGTPVNIGEAVGVIAAQSIGEPGTQLTMRTFHIGGAATRGAEQSMVEASRDGIVTIKNRNVVENSQKVLVVMSRNCEILLTDENGVERARYRVPYGARLMVSEGEAVTRTQKMAEWDPYTLPIITEQAGTVEYLDLIDSITLVERMDEVTGLSSKVVVDYKQAAKGVDLRPRLQLKDASGNVVKLANGNDARYFLSPDSILSVENGAEVNAGDVLARIPREGSKTRDITGGLPRVAELFEARRPKDHAIIAEGEGRIEFGKDYKSKRCVIVKNDDTGEETQYLIPKGKHVSVQEGDFVQKGDPLVDGPRVPHDILKVMGVEALSDYLVNEIQDVYRLQGVKINDKHIEVIVRQMLQKVEILEPGDSTYLIGETVDRIEYEGENQRLMENGDTPAKAMPVLQGITKASLQTQSFISAASFQETTRVLTDAATSGKVDTLNGLKENVIVGRLIPAGTGSVMNRLRSIAASQDRQRVGGASPKAVEDAAE.

Zn(2+)-binding residues include C70, C72, C85, and C88. D504, D506, and D508 together coordinate Mg(2+). Residues C862, C936, C943, and C946 each contribute to the Zn(2+) site.

Belongs to the RNA polymerase beta' chain family. In terms of assembly, the RNAP catalytic core consists of 2 alpha, 1 beta, 1 beta' and 1 omega subunit. When a sigma factor is associated with the core the holoenzyme is formed, which can initiate transcription. The cofactor is Mg(2+). Requires Zn(2+) as cofactor.

It catalyses the reaction RNA(n) + a ribonucleoside 5'-triphosphate = RNA(n+1) + diphosphate. In terms of biological role, DNA-dependent RNA polymerase catalyzes the transcription of DNA into RNA using the four ribonucleoside triphosphates as substrates. The chain is DNA-directed RNA polymerase subunit beta' from Gluconobacter oxydans (strain 621H) (Gluconobacter suboxydans).